Here is a 176-residue protein sequence, read N- to C-terminus: Sec-independent protein translocase protein TatB (176 aa).

A helical membrane pass occupies residues 1–21; the sequence is MLDLGLSKMALIGVVALVVLG. The disordered stretch occupies residues 155–176; sequence QSGAARVARHQPASLRRPTRFL.

It belongs to the TatB family. In terms of assembly, the Tat system comprises two distinct complexes: a TatABC complex, containing multiple copies of TatA, TatB and TatC subunits, and a separate TatA complex, containing only TatA subunits. Substrates initially bind to the TatABC complex, which probably triggers association of the separate TatA complex to form the active translocon.

The protein resides in the cell inner membrane. In terms of biological role, part of the twin-arginine translocation (Tat) system that transports large folded proteins containing a characteristic twin-arginine motif in their signal peptide across membranes. Together with TatC, TatB is part of a receptor directly interacting with Tat signal peptides. TatB may form an oligomeric binding site that transiently accommodates folded Tat precursor proteins before their translocation. This is Sec-independent protein translocase protein TatB from Burkholderia ambifaria (strain ATCC BAA-244 / DSM 16087 / CCUG 44356 / LMG 19182 / AMMD) (Burkholderia cepacia (strain AMMD)).